Reading from the N-terminus, the 446-residue chain is Deoxyguanosinetriphosphate triphosphohydrolase-like protein (446 aa).

The interval 1 to 28 is disordered; that stretch reads MSSSVWQERRHGEDKQRRNDHRSPFQRD. Residues 7–28 are compositionally biased toward basic and acidic residues; sequence QERRHGEDKQRRNDHRSPFQRD. The region spanning 59-252 is the HD domain; that stretch reads RLTHSLEVSQ…MELADDIAYA (194 aa).

The protein belongs to the dGTPase family. Type 2 subfamily.

The chain is Deoxyguanosinetriphosphate triphosphohydrolase-like protein from Shewanella sp. (strain MR-7).